Here is a 321-residue protein sequence, read N- to C-terminus: Collectin-43 (321 aa).

The first 20 residues, 1–20, serve as a signal peptide directing secretion; sequence MLPLPLSILLLLTQSQSFLG. The interval 43 to 163 is disordered; that stretch reads PADSLRGHDG…GEKGARGETS (121 aa). Residues 47–65 are compositionally biased toward basic and acidic residues; sequence LRGHDGRDGKEGPQGEKGD. The Collagen-like domain maps to 49–162; sequence GHDGRDGKEG…PGEKGARGET (114 aa). Gly residues-rich tracts occupy residues 100–109 and 124–133; these read GPEGGVGAPG and GTPGPGGAIG. Residues 147-159 show a composition bias toward basic and acidic residues; the sequence is KGDRGDPGEKGAR. In terms of domain architecture, C-type lectin spans 222 to 321; it reads QLCREAKGQL…REERLVICEF (100 aa). 2 cysteine pairs are disulfide-bonded: Cys224–Cys319 and Cys297–Cys311.

It belongs to the SFTPD family. Oligomeric complex of 4 set of homotrimers. Post-translationally, hydroxylated. In terms of tissue distribution, liver specific.

Its subcellular location is the secreted. Its function is as follows. Lectin that binds to various sugars: mannose = ManNAc &gt; fucose &gt; GlcNAc &gt; glucose = maltose &gt; galactose &gt; lactose &gt; GalNAc. Could play a role in immune defense. The sequence is that of Collectin-43 (CL43) from Bos taurus (Bovine).